A 397-amino-acid chain; its full sequence is Multidrug resistance protein MdtH (397 aa).

A run of 11 helical transmembrane segments spans residues 11–31 (WFLA…MPMI), 32–52 (SLRF…ALGL), 71–91 (FGAR…FASL), 94–114 (AQSG…GCLF), 137–157 (LLMM…SWLL), 163–183 (YVCL…LLIL), 211–231 (LVLI…IFPI), 242–262 (AVGW…YPLA), 291–311 (FANT…GIVI), 340–360 (LALG…YAML), and 366–386 (LPWL…VNCF).

It belongs to the major facilitator superfamily. DHA1 family. MdtH (TC 2.A.1.2.21) subfamily.

The protein localises to the cell inner membrane. The chain is Multidrug resistance protein MdtH from Aeromonas hydrophila subsp. hydrophila (strain ATCC 7966 / DSM 30187 / BCRC 13018 / CCUG 14551 / JCM 1027 / KCTC 2358 / NCIMB 9240 / NCTC 8049).